Consider the following 178-residue polypeptide: Meiotically up-regulated gene 95 protein (178 aa).

At 1 to 12 the chain is on the cytoplasmic side; it reads MNLFVYIAQNPT. A helical; Signal-anchor for type II membrane protein membrane pass occupies residues 13 to 30; the sequence is LTKWFFCCVCTILTMPFF. Topologically, residues 31–178 are lumenal; the sequence is KKPYRKRGIS…ESIEKPENDN (148 aa).

The protein resides in the endoplasmic reticulum membrane. Has a role in meiosis. The sequence is that of Meiotically up-regulated gene 95 protein (mug95) from Schizosaccharomyces pombe (strain 972 / ATCC 24843) (Fission yeast).